The primary structure comprises 371 residues: Probable palmitoyltransferase ZDHHC11B (371 aa).

A run of 2 helical transmembrane segments spans residues 43–63 and 70–90; these read VVTWAVFVGLSLATFRIFIPL and YIAYVVTGGIFSFHLVVHLIA. Residues 125–175 form the DHHC domain; sequence QFCHLCKVTVNKKTKHCISCNKCVSGFDHHCKWINNCVGSRNYWFFFSTVA. The active-site S-palmitoyl cysteine intermediate is the Cys155. 3 consecutive transmembrane segments (helical) span residues 177–197, 216–236, and 239–259; these read ATAGMLCLIAILLYVLVQYLV, TWLLFLPLFPVQVQTLIVVII, and LVLLLDLLGLVQLGQLLIFHI. The disordered stretch occupies residues 335 to 371; the sequence is DGDSKAQEADDAPSTSTLGLQQETTEPMKTDSAESED. The segment covering 347-359 has biased composition (polar residues); sequence PSTSTLGLQQETT. Over residues 360 to 371 the composition is skewed to basic and acidic residues; that stretch reads EPMKTDSAESED.

The protein belongs to the DHHC palmitoyltransferase family.

Its subcellular location is the membrane. It catalyses the reaction L-cysteinyl-[protein] + hexadecanoyl-CoA = S-hexadecanoyl-L-cysteinyl-[protein] + CoA. Probable palmitoyltransferase that could catalyze the addition of palmitate onto various protein substrates and be involved in a variety of cellular processes. May play a role in cell proliferation. This is Probable palmitoyltransferase ZDHHC11B from Homo sapiens (Human).